Here is a 234-residue protein sequence, read N- to C-terminus: 7-cyano-7-deazaguanine synthase (234 aa).

13–23 (LSGGQDSTTCL) contacts ATP. Zn(2+) is bound by residues cysteine 193, cysteine 201, cysteine 204, and cysteine 207.

This sequence belongs to the QueC family. Zn(2+) is required as a cofactor.

It catalyses the reaction 7-carboxy-7-deazaguanine + NH4(+) + ATP = 7-cyano-7-deazaguanine + ADP + phosphate + H2O + H(+). The protein operates within purine metabolism; 7-cyano-7-deazaguanine biosynthesis. Functionally, catalyzes the ATP-dependent conversion of 7-carboxy-7-deazaguanine (CDG) to 7-cyano-7-deazaguanine (preQ(0)). This chain is 7-cyano-7-deazaguanine synthase, found in Chromobacterium violaceum (strain ATCC 12472 / DSM 30191 / JCM 1249 / CCUG 213 / NBRC 12614 / NCIMB 9131 / NCTC 9757 / MK).